The chain runs to 893 residues: DNA mismatch repair protein MutS (893 aa).

638-645 (GPNMAGKS) is a binding site for ATP.

It belongs to the DNA mismatch repair MutS family.

Its function is as follows. This protein is involved in the repair of mismatches in DNA. It is possible that it carries out the mismatch recognition step. This protein has a weak ATPase activity. This is DNA mismatch repair protein MutS from Lawsonia intracellularis (strain PHE/MN1-00).